Reading from the N-terminus, the 111-residue chain is Rubredoxin (111 aa).

The 52-residue stretch at Leu11 to Ile62 folds into the Rubredoxin-like domain. Cys16, Cys19, Cys49, and Cys52 together coordinate Fe cation.

The protein belongs to the rubredoxin family. The cofactor is Fe(3+).

Its function is as follows. Rubredoxin is a small nonheme, iron protein lacking acid-labile sulfide. Its single Fe, chelated to 4 Cys, functions as an electron acceptor and may also stabilize the conformation of the molecule. Could be involved in hydrogenase-linked redox processes. The protein is Rubredoxin (rub) of Nostoc sp. (strain PCC 7120 / SAG 25.82 / UTEX 2576).